We begin with the raw amino-acid sequence, 159 residues long: Gigasin-1 (159 aa).

Disordered regions lie at residues 1-33 (GKAT…HDQT) and 80-159 (KESY…KYRR).

Component of the organic matrix of calcified shell layers.

This Magallana gigas (Pacific oyster) protein is Gigasin-1.